The following is a 349-amino-acid chain: tRNA N6-adenosine threonylcarbamoyltransferase (349 aa).

Positions 114 and 118 each coordinate Fe cation. Substrate-binding positions include 136–140, Asp169, Gly182, and Asn280; that span reads IMSGG. Residue Asp308 participates in Fe cation binding.

Belongs to the KAE1 / TsaD family. Fe(2+) serves as cofactor.

The protein resides in the cytoplasm. It carries out the reaction L-threonylcarbamoyladenylate + adenosine(37) in tRNA = N(6)-L-threonylcarbamoyladenosine(37) in tRNA + AMP + H(+). In terms of biological role, required for the formation of a threonylcarbamoyl group on adenosine at position 37 (t(6)A37) in tRNAs that read codons beginning with adenine. Is involved in the transfer of the threonylcarbamoyl moiety of threonylcarbamoyl-AMP (TC-AMP) to the N6 group of A37, together with TsaE and TsaB. TsaD likely plays a direct catalytic role in this reaction. The sequence is that of tRNA N6-adenosine threonylcarbamoyltransferase from Ehrlichia chaffeensis (strain ATCC CRL-10679 / Arkansas).